A 574-amino-acid polypeptide reads, in one-letter code: Putative thiamine pyrophosphate-containing protein YdaP (574 aa).

Positions 28–55 form a coiled coil; the sequence is DSINEFIEELRHERNQLKFIQTRHEEVA. Glutamate 52 is a binding site for thiamine diphosphate. Residues 256–277 and 294–313 each bind FAD; these read IGTK…LGTS and DSDP…LVCD. A thiamine pyrophosphate binding region spans residues 384 to 464; sequence TVTVWMARHF…ITVVILNNEN (81 aa). Mg(2+) contacts are provided by aspartate 435 and asparagine 462.

It belongs to the TPP enzyme family. Mg(2+) serves as cofactor. Thiamine diphosphate is required as a cofactor.

This chain is Putative thiamine pyrophosphate-containing protein YdaP (ydaP), found in Bacillus subtilis (strain 168).